Here is a 631-residue protein sequence, read N- to C-terminus: BTB/POZ domain-containing protein At1g67900 (631 aa).

A BTB domain is found at 28-93; the sequence is SDFTIEVSGS…CYGITITISA (66 aa). Residues 200–509 form the NPH3 domain; it reads GWWAEDIAEL…VQVLFYEQAR (310 aa). The tract at residues 361–399 is disordered; it reads QTSPPTSPLRGKKGMMDRRRRSRSAENIDLEFQESRRSS. Over residues 370-382 the composition is skewed to basic residues; that stretch reads RGKKGMMDRRRRS. Tyr-450 carries the post-translational modification Phosphotyrosine. Ser-567 bears the Phosphoserine mark.

This sequence belongs to the NPH3 family.

It participates in protein modification; protein ubiquitination. Its function is as follows. May act as a substrate-specific adapter of an E3 ubiquitin-protein ligase complex (CUL3-RBX1-BTB) which mediates the ubiquitination and subsequent proteasomal degradation of target proteins. The protein is BTB/POZ domain-containing protein At1g67900 of Arabidopsis thaliana (Mouse-ear cress).